Here is a 150-residue protein sequence, read N- to C-terminus: Large ribosomal subunit protein bL9 (150 aa).

Belongs to the bacterial ribosomal protein bL9 family.

In terms of biological role, binds to the 23S rRNA. The protein is Large ribosomal subunit protein bL9 of Paraburkholderia phymatum (strain DSM 17167 / CIP 108236 / LMG 21445 / STM815) (Burkholderia phymatum).